Reading from the N-terminus, the 101-residue chain is Apolipoprotein C-II (101 aa).

The first 17 residues, 1–17 (MGTRFLLALCLVLLVLG), serve as a signal peptide directing secretion. Residues 66–74 (AVDEKLRDL) form a lipid binding region. The interval 78–101 (STAAMSTYTGIFTDQVLSVLKGEE) is lipoprotein lipase cofactor.

Belongs to the apolipoprotein C2 family. Proapolipoprotein C-II is synthesized as a sialic acid containing glycoprotein which is subsequently desialylated prior to its proteolytic processing. In terms of processing, proapolipoprotein C-II, the major form found in plasma undergoes proteolytic cleavage of its N-terminal hexapeptide to generate apolipoprotein C-II, which occurs as the minor form in plasma.

The protein localises to the secreted. Its function is as follows. Component of chylomicrons, very low-density lipoproteins (VLDL), low-density lipoproteins (LDL), and high-density lipoproteins (HDL) in plasma. Plays an important role in lipoprotein metabolism as an activator of lipoprotein lipase. Both proapolipoprotein C-II and apolipoprotein C-II can activate lipoprotein lipase. The chain is Apolipoprotein C-II (APOC2) from Chlorocebus sabaeus (Green monkey).